Consider the following 525-residue polypeptide: Ribonuclease III domain-containing protein RNC1, chloroplastic (525 aa).

A chloroplast-targeting transit peptide spans 1 to 28 (MGPPAMAFQALTLTPLPFSLHSSSRRVR). 2 RNase III domains span residues 125–271 (LLEA…LCFG) and 403–503 (EHPR…CVYG).

Interacts with RNA. Part of large ribonucleo-protein particles that contain CAF1 and/or CAF2.

It localises to the plastid. It is found in the chloroplast stroma. Binds specific group II introns in chloroplasts and facilitates their splicing. Acts on both subgroup IIA and subgroup IIB introns. The substrates of the subgroup II also require the CRM domain proteins CAF1 or CAF2. Binds both single-stranded and double-stranded RNA non-specifically, but lacks endonuclease activity. Required for plastid ribosome biogenesis. In Zea mays (Maize), this protein is Ribonuclease III domain-containing protein RNC1, chloroplastic.